We begin with the raw amino-acid sequence, 168 residues long: Small ribosomal subunit protein uS5 (168 aa).

One can recognise an S5 DRBM domain in the interval 13–76; the sequence is LAEKLIAVNR…EKARRNMINV (64 aa).

This sequence belongs to the universal ribosomal protein uS5 family. Part of the 30S ribosomal subunit. Contacts proteins S4 and S8.

With S4 and S12 plays an important role in translational accuracy. In terms of biological role, located at the back of the 30S subunit body where it stabilizes the conformation of the head with respect to the body. This Pseudoalteromonas translucida (strain TAC 125) protein is Small ribosomal subunit protein uS5.